The primary structure comprises 421 residues: Ribulose bisphosphate carboxylase large chain (421 aa).

Asn68 and Thr118 together coordinate substrate. The active-site Proton acceptor is Lys120. Lys122 is a binding site for substrate. Lys146, Asp148, and Glu149 together coordinate Mg(2+). Residue Lys146 is modified to N6-carboxylysine. Catalysis depends on His239, which acts as the Proton acceptor. The substrate site is built by Arg240, His272, and Ser324.

This sequence belongs to the RuBisCO large chain family. Type I subfamily. Heterohexadecamer of 8 large chains and 8 small chains; disulfide-linked. The disulfide link is formed within the large subunit homodimers. It depends on Mg(2+) as a cofactor. The disulfide bond which can form in the large chain dimeric partners within the hexadecamer appears to be associated with oxidative stress and protein turnover.

It localises to the plastid. The protein resides in the chloroplast. The catalysed reaction is 2 (2R)-3-phosphoglycerate + 2 H(+) = D-ribulose 1,5-bisphosphate + CO2 + H2O. The enzyme catalyses D-ribulose 1,5-bisphosphate + O2 = 2-phosphoglycolate + (2R)-3-phosphoglycerate + 2 H(+). Its function is as follows. RuBisCO catalyzes two reactions: the carboxylation of D-ribulose 1,5-bisphosphate, the primary event in carbon dioxide fixation, as well as the oxidative fragmentation of the pentose substrate in the photorespiration process. Both reactions occur simultaneously and in competition at the same active site. This chain is Ribulose bisphosphate carboxylase large chain (rbcL), found in Aegilops crassa (Persian goatgrass).